The primary structure comprises 545 residues: ATP synthase subunit alpha (545 aa).

Residue 173–180 (GDRQTGKT) coordinates ATP.

The protein belongs to the ATPase alpha/beta chains family. In terms of assembly, F-type ATPases have 2 components, CF(1) - the catalytic core - and CF(0) - the membrane proton channel. CF(1) has five subunits: alpha(3), beta(3), gamma(1), delta(1), epsilon(1). CF(0) has three main subunits: a(1), b(2) and c(9-12). The alpha and beta chains form an alternating ring which encloses part of the gamma chain. CF(1) is attached to CF(0) by a central stalk formed by the gamma and epsilon chains, while a peripheral stalk is formed by the delta and b chains.

The protein resides in the cell membrane. It carries out the reaction ATP + H2O + 4 H(+)(in) = ADP + phosphate + 5 H(+)(out). Produces ATP from ADP in the presence of a proton gradient across the membrane. The alpha chain is a regulatory subunit. This chain is ATP synthase subunit alpha, found in Clavibacter michiganensis subsp. michiganensis (strain NCPPB 382).